Consider the following 289-residue polypeptide: Oxaloacetate decarboxylase 1 (289 aa).

Serine 50 lines the substrate pocket. Aspartate 88 is a Mg(2+) binding site. Residues arginine 159 and histidine 235 each contribute to the substrate site.

The protein belongs to the isocitrate lyase/PEP mutase superfamily. Oxaloacetate decarboxylase family. In terms of assembly, homotetramer; dimer of dimers. Mg(2+) is required as a cofactor.

The enzyme catalyses oxaloacetate + H(+) = pyruvate + CO2. Catalyzes the decarboxylation of oxaloacetate into pyruvate. Seems to play a role in maintaining cellular concentrations of bicarbonate and pyruvate. The protein is Oxaloacetate decarboxylase 1 of Pseudomonas fluorescens (strain Pf0-1).